Here is a 73-residue protein sequence, read N- to C-terminus: Translational regulator CsrA (73 aa).

The tract at residues glutamate 54–valine 73 is disordered. Residues serine 61–valine 73 show a composition bias toward polar residues.

This sequence belongs to the CsrA/RsmA family. In terms of assembly, homodimer; the beta-strands of each monomer intercalate to form a hydrophobic core, while the alpha-helices form wings that extend away from the core.

It localises to the cytoplasm. A translational regulator that binds mRNA to regulate translation initiation and/or mRNA stability. Usually binds in the 5'-UTR at or near the Shine-Dalgarno sequence preventing ribosome-binding, thus repressing translation. Its main target seems to be the major flagellin gene, while its function is anatagonized by FliW. This chain is Translational regulator CsrA, found in Treponema pallidum (strain Nichols).